The sequence spans 392 residues: Mitochondrial distribution and morphology protein 10 (392 aa).

It belongs to the MDM10 family. In terms of assembly, component of the ER-mitochondria encounter structure (ERMES) or MDM complex, composed of MMM1, MDM10, MDM12 and MDM34. Associates with the mitochondrial outer membrane sorting assembly machinery SAM(core) complex.

Its subcellular location is the mitochondrion outer membrane. In terms of biological role, component of the ERMES/MDM complex, which serves as a molecular tether to connect the endoplasmic reticulum and mitochondria. Components of this complex are involved in the control of mitochondrial shape and protein biogenesis and may function in phospholipid exchange. MDM10 is involved in the late assembly steps of the general translocase of the mitochondrial outer membrane (TOM complex). Functions in the TOM40-specific route of the assembly of outer membrane beta-barrel proteins, including the association of TOM40 with the receptor TOM22 and small TOM proteins. Can associate with the SAM(core) complex as well as the MDM12-MMM1 complex, both involved in late steps of the major beta-barrel assembly pathway, that is responsible for biogenesis of all outer membrane beta-barrel proteins. May act as a switch that shuttles between both complexes and channels precursor proteins into the TOM40-specific pathway. Plays a role in mitochondrial morphology and in the inheritance of mitochondria. The protein is Mitochondrial distribution and morphology protein 10 of Phaeosphaeria nodorum (strain SN15 / ATCC MYA-4574 / FGSC 10173) (Glume blotch fungus).